Here is a 483-residue protein sequence, read N- to C-terminus: Protein FIZZY-RELATED 2 (483 aa).

A disordered region spans residues 1–28; the sequence is MEEEDPTASNVITNSNSSSMRNLSPAMN. Over residues 7–28 the composition is skewed to polar residues; sequence TASNVITNSNSSSMRNLSPAMN. 7 WD repeats span residues 174–211, 215–254, 257–294, 298–337, 340–382, 384–425, and 428–467; these read QDDF…VTKL, GAED…RTRT, GHRL…DHVS, GHKS…PVLK, EHTA…HLSS, DTCS…KIAT, and GHTY…KSQN.

The protein belongs to the WD repeat CDC20/Fizzy family. In terms of assembly, associates with the APC/C complex. Interacts with CDC20-1, CDC20-2, CYCA1-1, CYCA1-2, CYCA3-4, CYCB1-1 and CYCB1-2. Binds to GIG1 and PYM. Expressed in seedlings, flowers, leaves and roots. Expressed in the differentiating cell files of the root elongation zone.

The protein localises to the nucleus. The protein operates within protein modification; protein ubiquitination. In terms of biological role, activator protein that regulates the ubiquitin ligase activity and substrate specificity of the anaphase promoting complex/cyclosome (APC/C). Necessary and sufficient for endoreduplication and correct cell expansion. Controls meristem size by stimulating endoreduplication in the elongation zone. The sequence is that of Protein FIZZY-RELATED 2 (FZR2) from Arabidopsis thaliana (Mouse-ear cress).